We begin with the raw amino-acid sequence, 275 residues long: MTQALQALIDQAWEDRTSLSPKSAPADIREAVANVIGQLDAGTLRVAEKQGKDWIVNQWVKKAVLLSFRLEDNAPMSAGGFAQFYDKVPTKFANWSGDDFAKAGFRVVPPAVARRGSFIAKNAVLMPSYVNIGAYVDEGTMVDTWATVGSCAQIGKNVHLSGGVGIGGVLEPLQANPVIIEDNCFIGARSEVVEGVIVEENSVISMGVYLGQSTKIYDRETGEIHYGRVPAGSVVVAGNLPSKDGKYSLYCAVIVKKVDAQTRAKTSLNDLLRGD.

Substrate-binding residues include Arg106 and Asp143.

Belongs to the transferase hexapeptide repeat family. Homotrimer.

Its subcellular location is the cytoplasm. It carries out the reaction (S)-2,3,4,5-tetrahydrodipicolinate + succinyl-CoA + H2O = (S)-2-succinylamino-6-oxoheptanedioate + CoA. It participates in amino-acid biosynthesis; L-lysine biosynthesis via DAP pathway; LL-2,6-diaminopimelate from (S)-tetrahydrodipicolinate (succinylase route): step 1/3. This is 2,3,4,5-tetrahydropyridine-2,6-dicarboxylate N-succinyltransferase from Cupriavidus pinatubonensis (strain JMP 134 / LMG 1197) (Cupriavidus necator (strain JMP 134)).